Consider the following 385-residue polypeptide: Probable tRNA sulfurtransferase (385 aa).

Positions 65-165 (AILQELFSFL…KEHFLVFTER (101 aa)) constitute a THUMP domain. ATP is bound by residues 183 to 184 (LL), 208 to 209 (TF), R267, G285, and Q294.

The protein belongs to the ThiI family.

The protein localises to the cytoplasm. It catalyses the reaction [ThiI sulfur-carrier protein]-S-sulfanyl-L-cysteine + a uridine in tRNA + 2 reduced [2Fe-2S]-[ferredoxin] + ATP + H(+) = [ThiI sulfur-carrier protein]-L-cysteine + a 4-thiouridine in tRNA + 2 oxidized [2Fe-2S]-[ferredoxin] + AMP + diphosphate. The catalysed reaction is [ThiS sulfur-carrier protein]-C-terminal Gly-Gly-AMP + S-sulfanyl-L-cysteinyl-[cysteine desulfurase] + AH2 = [ThiS sulfur-carrier protein]-C-terminal-Gly-aminoethanethioate + L-cysteinyl-[cysteine desulfurase] + A + AMP + 2 H(+). It functions in the pathway cofactor biosynthesis; thiamine diphosphate biosynthesis. Functionally, catalyzes the ATP-dependent transfer of a sulfur to tRNA to produce 4-thiouridine in position 8 of tRNAs, which functions as a near-UV photosensor. Also catalyzes the transfer of sulfur to the sulfur carrier protein ThiS, forming ThiS-thiocarboxylate. This is a step in the synthesis of thiazole, in the thiamine biosynthesis pathway. The sulfur is donated as persulfide by IscS. In Mycoplasma genitalium (strain ATCC 33530 / DSM 19775 / NCTC 10195 / G37) (Mycoplasmoides genitalium), this protein is Probable tRNA sulfurtransferase.